The primary structure comprises 170 residues: MGVTKKPDLNDPVLRAKLAKGMGHNYYGEPAWPNDLLYIFPVVILGTIACNVGLAVLEPSMIGEPADPFATPLEILPEWYFFPVFQILRTVPNKLLGVLLMVSVPAGLLTVPFLENVNKFQNPFRRPVATTVFLIGTAVALWLGIGATLPIDKSLTLGLFQIQIDLEILR.

The next 3 membrane-spanning stretches (helical) occupy residues 36–56 (LLYI…GLAV), 95–115 (LLGV…PFLE), and 131–151 (TVFL…TLPI).

This sequence belongs to the cytochrome b family. PetD subfamily. As to quaternary structure, the 4 large subunits of the cytochrome b6-f complex are cytochrome b6, subunit IV (17 kDa polypeptide, petD), cytochrome f and the Rieske protein, while the 4 small subunits are petG, petL, petM and petN. The complex functions as a dimer.

It is found in the plastid. It localises to the chloroplast thylakoid membrane. Its function is as follows. Component of the cytochrome b6-f complex, which mediates electron transfer between photosystem II (PSII) and photosystem I (PSI), cyclic electron flow around PSI, and state transitions. The polypeptide is Cytochrome b6-f complex subunit 4 (Nymphaea alba (White water-lily)).